The chain runs to 297 residues: Large ribosomal subunit protein uL18 (297 aa).

At glycine 2 the chain carries N-acetylglycine. Residues lysine 5 and lysine 48 each carry the N6-acetyllysine modification. Residue serine 185 is modified to Phosphoserine. Lysine 220 is modified (N6-acetyllysine; alternate). Residue lysine 220 forms a Glycyl lysine isopeptide (Lys-Gly) (interchain with G-Cter in SUMO1); alternate linkage. Residue lysine 220 forms a Glycyl lysine isopeptide (Lys-Gly) (interchain with G-Cter in SUMO2); alternate linkage. A Phosphothreonine modification is found at threonine 232. Positions 253–297 (YEKKPKREVKKKRWNRPKMSLAQKKDRVAQKKASFLRAQERAAES) are disordered. The segment covering 258–268 (KREVKKKRWNR) has biased composition (basic residues). The residue at position 272 (serine 272) is a Phosphoserine.

The protein belongs to the universal ribosomal protein uL18 family. As to quaternary structure, component of the large ribosomal subunit (LSU). Part of the 5S RNP complex, which is a LSU subcomplex composed of the 5S RNA, RPL5 and RPL11. Component of a hexameric 5S RNP precursor complex, composed of 5S RNA, RRS1, RPF2/BXDC1, RPL5, RPL11 and HEATR3; this complex acts as a precursor for ribosome assembly. Interacts with NVL in an ATP-dependent manner. Interacts with RRP1B. Interacts with IPO5, IPO7 and KPNB1; these interactions may be involved in RPL5 nuclear import for the assembly of ribosomal subunits. Interacts with RRP1B.

The protein localises to the cytoplasm. Its subcellular location is the nucleus. It localises to the nucleolus. Functionally, component of the ribosome, a large ribonucleoprotein complex responsible for the synthesis of proteins in the cell. The small ribosomal subunit (SSU) binds messenger RNAs (mRNAs) and translates the encoded message by selecting cognate aminoacyl-transfer RNA (tRNA) molecules. The large subunit (LSU) contains the ribosomal catalytic site termed the peptidyl transferase center (PTC), which catalyzes the formation of peptide bonds, thereby polymerizing the amino acids delivered by tRNAs into a polypeptide chain. The nascent polypeptides leave the ribosome through a tunnel in the LSU and interact with protein factors that function in enzymatic processing, targeting, and the membrane insertion of nascent chains at the exit of the ribosomal tunnel. As part of the 5S RNP/5S ribonucleoprotein particle it is an essential component of the LSU, required for its formation and the maturation of rRNAs. It also couples ribosome biogenesis to p53/TP53 activation. As part of the 5S RNP it accumulates in the nucleoplasm and inhibits MDM2, when ribosome biogenesis is perturbed, mediating the stabilization and the activation of TP53. In Rattus norvegicus (Rat), this protein is Large ribosomal subunit protein uL18 (Rpl5).